Reading from the N-terminus, the 517-residue chain is Zinc finger protein 215 (517 aa).

The SCAN box domain occupies 48–126 (RQKFRHFQYL…KDMVTLIEDV (79 aa)). A KRAB domain is found at 164 to 237 (VTFKDVVVEF…EKEIPRKTIF (74 aa)). 4 consecutive C2H2-type zinc fingers follow at residues 379 to 401 (YECY…QIIH), 407 to 429 (YKCS…QKLH), 462 to 484 (YQCV…QMIH), and 490 to 512 (FKCK…QKLH).

Belongs to the krueppel C2H2-type zinc-finger protein family.

The protein localises to the nucleus. May be involved in transcriptional regulation. This Homo sapiens (Human) protein is Zinc finger protein 215 (ZNF215).